The primary structure comprises 62 residues: Pelophylaxin-4 (62 aa).

Positions 1 to 22 (MLTLKKSMLLIFFLGTINFSLC) are cleaved as a signal peptide. The propeptide occupies 23-45 (EQERNADEEERRDEPEERDVEVQ). Leucine amide is present on Leu-60. Gly-61 is a propeptide.

In terms of tissue distribution, expressed by the skin glands.

Its subcellular location is the secreted. Its function is as follows. Antimicrobial peptide. The sequence is that of Pelophylaxin-4 from Pelophylax fukienensis (Fukien gold-striped pond frog).